Consider the following 793-residue polypeptide: Plakophilin-3 (793 aa).

The segment at 56–82 (QLGQQPRHNGPAEPDGAAEAARGASRA) is disordered. Over residues 66 to 82 (PAEPDGAAEAARGASRA) the composition is skewed to low complexity. The residue at position 81 (R81) is an Omega-N-methylarginine. S122, S179, and S182 each carry phosphoserine. Y194 bears the Phosphotyrosine mark. The segment at 221-240 (SSSRAGGLDWPEATEGPPSR) is disordered. Position 239 is a phosphoserine (S239). Position 249 is a phosphothreonine (T249). Position 260 is an omega-N-methylarginine (R260). S282, S310, S311, and S328 each carry phosphoserine. The interval 282–285 (SLSL) is required for interaction with SFN. Positions 291–720 (LPDMRGLDSY…ADVLINIIAV (430 aa)) are required for interaction with GSK3B. ARM repeat units lie at residues 302–345 (GHRT…HKCY), 348–387 (AAAKKQARSLQAVPRLVKLFNHANQEVQRHATGAMRNLVY), 390–429 (ADNKLALVEENGIFELLRALREQDDELRKNVTGILWNLSS), 446–484 (TDLVLSPLSGAGGPPLIQQNASEAEIFYNATGFLRNLSS), 488–533 (ATRQ…NLSY), 592–633 (PKGL…NITA), 641–680 (VLSRLALEQERILNPLLDRVRTADHHQLRSLTGLIRNLSR), and 685–726 (KDEM…NLVV). The interval 513 to 793 (VGKCEDKSVE…GYRKEDFLGP (281 aa)) is required for binding to PKP2 mRNA.

The protein belongs to the beta-catenin family. In terms of assembly, found in a complex composed of CDH1, RAP1A and PKP3; PKP3 acts as a scaffold protein within the complex, the complex is required for CDH1 localization to mature desmosome cell junctions. Interacts with FXR1; the interaction facilitates the binding of PKP3 to PKP2 mRNA. Interacts (via ARM repeats) with GSK3B; the interaction may be involved in PKP3 protein degradation. Interacts with hyperphosphorylated and hypophosphorylated RB1; the interaction inhibits RB1 interaction with and repression of the transcription factor E2F1, potentially via sequestering RB1 to the cytoplasm. Interacts with CDKN1A; the interaction sequesters CDKN1A to the cytoplasm thereby repressing its role as an inhibitor of CDK4- and CDK6-driven RB1 phosphorylation. Interacts (via N-terminus) with SFN; the interaction maintains the cytoplasmic pool of PKP3, facilitates PKP3 exchange at desmosomes and restricts PKP3 localization to existing desmosome cell junctions. Interacts (via N-terminus) with SFN; the interaction maintains the cytoplasmic pool of PKP3 and restricts PKP3 localization to existing desmosome cell junctions. Interacts (via N-terminus) with JUP; the interaction is required for PKP3 localization to desmosome cell-cell junctions. Post-translationally, phosphorylated at Ser-282 when localized to the cytoplasm, PKP3 at desmosome cell junctions is not phosphorylated. Phosphorylation at Try-194 by SRC is induced by reactive oxygen species and potentially acts as a release mechanism from desmosome cell-cell junctions.

The protein localises to the nucleus. Its subcellular location is the cell junction. It localises to the desmosome. The protein resides in the cytoplasm. It is found in the cell membrane. The protein localises to the adherens junction. In terms of biological role, a component of desmosome cell-cell junctions which are required for positive regulation of cellular adhesion. Required for the localization of DSG2, DSP and PKP2 to mature desmosome junctions. May also play a role in the maintenance of DSG3 protein abundance in keratinocytes. Required for the formation of DSP-containing desmosome precursors in the cytoplasm during desmosome assembly. Also regulates the accumulation of CDH1 to mature desmosome junctions, via cAMP-dependent signaling and its interaction with activated RAP1A. Positively regulates the stabilization of PKP2 mRNA and therefore protein abundance, via its interaction with FXR1, may also regulate the protein abundance of DSP via the same mechanism. May also regulate the protein abundance of the desmosome component PKP1. Required for the organization of desmosome junctions at intercellular borders between basal keratinocytes of the epidermis, as a result plays a role in maintenance of the dermal barrier and regulation of the dermal inflammatory response. Required during epidermal keratinocyte differentiation for cell adherence at tricellular cell-cell contacts, via regulation of the timely formation of adherens junctions and desmosomes in a calcium-dependent manner, and may also play a role in the organization of the intracellular actin fiber belt. Acts as a negative regulator of the inflammatory response in hematopoietic cells of the skin and intestine, via modulation of proinflammatory cytokine production. Important for epithelial barrier maintenance in the intestine to reduce intestinal permeability, thereby plays a role in protection from intestinal-derived endotoxemia. Required for the development of hair follicles, via a role in the regulation of inner root sheaf length, correct alignment and anterior-posterior polarity of hair follicles. Promotes proliferation and cell-cycle G1/S phase transition of keratinocytes. Promotes E2F1-driven transcription of G1/S phase promoting genes by acting to release E2F1 from its inhibitory interaction with RB1, via sequestering RB1 and CDKN1A to the cytoplasm and thereby increasing CDK4- and CDK6-driven phosphorylation of RB1. May act as a scaffold protein to facilitate MAPK phosphorylation of RPS6KA protein family members and subsequently promote downstream EGFR signaling. May play a role in the positive regulation of transcription of Wnt-mediated TCF-responsive target genes. The polypeptide is Plakophilin-3 (PKP3) (Bos taurus (Bovine)).